Reading from the N-terminus, the 512-residue chain is 2-isopropylmalate synthase (512 aa).

The Pyruvate carboxyltransferase domain occupies 5 to 268 (LIIFDTTLRD…DIGIDTQQIL (264 aa)). Aspartate 14, histidine 202, histidine 204, and asparagine 239 together coordinate Mn(2+). The regulatory domain stretch occupies residues 394–512 (GFVSLSQHSE…SKADRVAAQG (119 aa)).

It belongs to the alpha-IPM synthase/homocitrate synthase family. LeuA type 1 subfamily. Homodimer. Mn(2+) is required as a cofactor.

It localises to the cytoplasm. It carries out the reaction 3-methyl-2-oxobutanoate + acetyl-CoA + H2O = (2S)-2-isopropylmalate + CoA + H(+). The protein operates within amino-acid biosynthesis; L-leucine biosynthesis; L-leucine from 3-methyl-2-oxobutanoate: step 1/4. Catalyzes the condensation of the acetyl group of acetyl-CoA with 3-methyl-2-oxobutanoate (2-ketoisovalerate) to form 3-carboxy-3-hydroxy-4-methylpentanoate (2-isopropylmalate). This chain is 2-isopropylmalate synthase, found in Polaromonas naphthalenivorans (strain CJ2).